A 221-amino-acid chain; its full sequence is Histone H1.3 (221 aa).

Over residues 1 to 17 (MSETAPLAPTIPAPAEK) the composition is skewed to low complexity. The tract at residues 1-43 (MSETAPLAPTIPAPAEKTPVKKKAKKAGATAGKRKASGPPVSE) is disordered. Ser2 carries the N-acetylserine modification. The residue at position 2 (Ser2) is a Phosphoserine. Lys17 carries the post-translational modification N6-acetyllysine. Thr18 bears the Phosphothreonine mark. The segment covering 20–36 (VKKKAKKAGATAGKRKA) has biased composition (basic residues). N6-(beta-hydroxybutyryl)lysine is present on residues Lys35, Lys47, and Lys53. Residues 37–110 (SGPPVSELIT…GASGSFKLNK (74 aa)) enclose the H15 domain. Arg55 bears the Citrulline mark. N6-(beta-hydroxybutyryl)lysine is present on residues Lys65, Lys76, Lys86, and Lys91. Residues 90–221 (SKGTLVQTKG…KAKKAAPKKK (132 aa)) are disordered. Ser105 is subject to Phosphoserine; by PKC. The residue at position 107 (Lys107) is an N6-(beta-hydroxybutyryl)lysine. Basic residues-rich tracts occupy residues 120 to 141 (KAKK…KPKK), 150 to 161 (KSIKKTPKKVKK), and 170 to 179 (KVAKSAKKVK). The residue at position 170 (Lys170) is an N6-(beta-hydroxybutyryl)lysine. The segment covering 180-193 (TPQPKKAAKSPAKA) has biased composition (low complexity). Residues 194–221 (KAPKPKAAKPKSGKPKVTKAKKAAPKKK) show a composition bias toward basic residues.

The protein belongs to the histone H1/H5 family. H1 histones are progressively phosphorylated during the cell cycle, becoming maximally phosphorylated during late G2 phase and M phase, and being dephosphorylated sharply thereafter. Post-translationally, citrullination at Arg-55 (H1R54ci) by PADI4 takes place within the DNA-binding site of H1 and results in its displacement from chromatin and global chromatin decondensation, thereby promoting pluripotency and stem cell maintenance.

It localises to the nucleus. Its subcellular location is the chromosome. In terms of biological role, histone H1 protein binds to linker DNA between nucleosomes forming the macromolecular structure known as the chromatin fiber. Histones H1 are necessary for the condensation of nucleosome chains into higher-order structured fibers. Also acts as a regulator of individual gene transcription through chromatin remodeling, nucleosome spacing and DNA methylation. The sequence is that of Histone H1.3 from Homo sapiens (Human).